We begin with the raw amino-acid sequence, 779 residues long: Acyl-CoA dehydrogenase family member 11 (779 aa).

Position 175 is an N6-acetyllysine (K175). Residue S210 is modified to Phosphoserine. A Phosphotyrosine modification is found at Y323. Residues K368 and K390 each carry the N6-succinyllysine modification. FAD-binding positions include 503 to 513, 511 to 513, 537 to 539, and S539; these read FCMTEPNVSSS, SSS, and WSS. S513 provides a ligand contact to substrate. 628–631 serves as a coordination point for substrate; it reads GPGR. Residues R656, Q726, and 726–730 contribute to the FAD site; that span reads QVHGG. Residue G754 coordinates substrate. FAD contacts are provided by residues 755–757 and E757; that span reads PDE. K765 is modified (N6-acetyllysine).

This sequence belongs to the acyl-CoA dehydrogenase family. As to quaternary structure, homodimer. The cofactor is FAD.

The protein resides in the peroxisome. The protein localises to the mitochondrion membrane. The enzyme catalyses a 2,3-saturated acyl-CoA + oxidized [electron-transfer flavoprotein] + H(+) = a (2E)-enoyl-CoA + reduced [electron-transfer flavoprotein]. It catalyses the reaction docosanoyl-CoA + oxidized [electron-transfer flavoprotein] + H(+) = (2E)-docosenoyl-CoA + reduced [electron-transfer flavoprotein]. It carries out the reaction tetracosanoyl-CoA + oxidized [electron-transfer flavoprotein] + H(+) = (2E)-tetracosenoyl-CoA + reduced [electron-transfer flavoprotein]. The catalysed reaction is eicosanoyl-CoA + oxidized [electron-transfer flavoprotein] + H(+) = (2E)-eicosenoyl-CoA + reduced [electron-transfer flavoprotein]. The enzyme catalyses hexacosanoyl-CoA + oxidized [electron-transfer flavoprotein] + H(+) = (2E)-hexacosenoyl-CoA + reduced [electron-transfer flavoprotein]. It catalyses the reaction tricosanoyl-CoA + oxidized [electron-transfer flavoprotein] + H(+) = (2E)-tricosenoyl-CoA + reduced [electron-transfer flavoprotein]. Its pathway is lipid metabolism; fatty acid beta-oxidation. Functionally, acyl-CoA dehydrogenase, that exhibits maximal activity towards saturated C22-CoA. Probably participates in beta-oxydation and energy production but could also play a role in the metabolism of specific fatty acids to control fatty acids composition of cellular lipids in brain. This Rattus norvegicus (Rat) protein is Acyl-CoA dehydrogenase family member 11 (Acad11).